The chain runs to 384 residues: PqqA peptide cyclase (384 aa).

Positions 15 to 231 (PGPPLWLLAE…NQWRDKLAAE (217 aa)) constitute a Radical SAM core domain. [4Fe-4S] cluster is bound by residues Cys-29, Cys-33, and Cys-36.

Belongs to the radical SAM superfamily. PqqE family. Interacts with PqqD. The interaction is necessary for activity of PqqE. Requires [4Fe-4S] cluster as cofactor.

The catalysed reaction is [PQQ precursor protein] + S-adenosyl-L-methionine = E-Y cross-linked-[PQQ precursor protein] + 5'-deoxyadenosine + L-methionine + H(+). The protein operates within cofactor biosynthesis; pyrroloquinoline quinone biosynthesis. Its function is as follows. Catalyzes the cross-linking of a glutamate residue and a tyrosine residue in the PqqA protein as part of the biosynthesis of pyrroloquinoline quinone (PQQ). This chain is PqqA peptide cyclase, found in Ectopseudomonas mendocina (strain ymp) (Pseudomonas mendocina).